The chain runs to 364 residues: Phospho-N-acetylmuramoyl-pentapeptide-transferase (364 aa).

Transmembrane regions (helical) follow at residues 18–38, 48–68, 91–111, 114–134, 154–174, 183–203, 214–234, 237–257, 280–300, and 343–363; these read SLLI…AQIL, LFPL…VVPV, GTPT…ALIW, LDPA…IGWI, LILQ…TQSA, GQII…VLVA, VDGL…ALMA, NPGL…FIVH, AIGI…IFFV, and TQIV…AVIS.

Belongs to the glycosyltransferase 4 family. MraY subfamily. Mg(2+) serves as cofactor.

Its subcellular location is the cell inner membrane. It carries out the reaction UDP-N-acetyl-alpha-D-muramoyl-L-alanyl-gamma-D-glutamyl-meso-2,6-diaminopimeloyl-D-alanyl-D-alanine + di-trans,octa-cis-undecaprenyl phosphate = di-trans,octa-cis-undecaprenyl diphospho-N-acetyl-alpha-D-muramoyl-L-alanyl-D-glutamyl-meso-2,6-diaminopimeloyl-D-alanyl-D-alanine + UMP. The protein operates within cell wall biogenesis; peptidoglycan biosynthesis. Functionally, catalyzes the initial step of the lipid cycle reactions in the biosynthesis of the cell wall peptidoglycan: transfers peptidoglycan precursor phospho-MurNAc-pentapeptide from UDP-MurNAc-pentapeptide onto the lipid carrier undecaprenyl phosphate, yielding undecaprenyl-pyrophosphoryl-MurNAc-pentapeptide, known as lipid I. In Rippkaea orientalis (strain PCC 8801 / RF-1) (Cyanothece sp. (strain PCC 8801)), this protein is Phospho-N-acetylmuramoyl-pentapeptide-transferase.